Here is a 471-residue protein sequence, read N- to C-terminus: Citrate synthase, mitochondrial (471 aa).

Residues H309, H355, and D409 contribute to the active site.

It belongs to the citrate synthase family. In terms of assembly, homodimer. As to expression, ubiquitous.

It localises to the mitochondrion matrix. It catalyses the reaction oxaloacetate + acetyl-CoA + H2O = citrate + CoA + H(+). The protein operates within carbohydrate metabolism; tricarboxylic acid cycle; isocitrate from oxaloacetate: step 1/2. This Solanum tuberosum (Potato) protein is Citrate synthase, mitochondrial.